We begin with the raw amino-acid sequence, 447 residues long: Glycogen synthase (447 aa).

Residue arginine 15 coordinates ADP-alpha-D-glucose.

The protein belongs to the glycosyltransferase 1 family. Bacterial/plant glycogen synthase subfamily.

It carries out the reaction [(1-&gt;4)-alpha-D-glucosyl](n) + ADP-alpha-D-glucose = [(1-&gt;4)-alpha-D-glucosyl](n+1) + ADP + H(+). It functions in the pathway glycan biosynthesis; glycogen biosynthesis. Synthesizes alpha-1,4-glucan chains using ADP-glucose. The protein is Glycogen synthase of Deinococcus geothermalis (strain DSM 11300 / CIP 105573 / AG-3a).